Here is a 365-residue protein sequence, read N- to C-terminus: Guanine nucleotide-binding protein alpha-6 subunit (365 aa).

Gly2 carries the N-myristoyl glycine lipid modification. The region spanning 42–364 (NRFKILLLGT…NENLRSAGLH (323 aa)) is the G-alpha domain. The tract at residues 45–58 (KILLLGTAESGKST) is G1 motif. Residues 50–57 (GTAESGKS), 187–193 (VHCRIST), 212–216 (DVGGQ), 281–284 (NKYD), and Ala336 each bind GTP. 2 residues coordinate Mg(2+): Ser57 and Thr193. The interval 185–193 (DIVHCRIST) is G2 motif. Residues 208-217 (FKMVDVGGQR) are G3 motif. Residues 277–284 (VLFLNKYD) are G4 motif. The segment at 334-339 (TTATDT) is G5 motif.

It belongs to the G-alpha family. G proteins are composed of 3 units; alpha, beta and gamma. The alpha chain contains the guanine nucleotide binding site.

Functionally, guanine nucleotide-binding proteins (G proteins) are involved as modulators or transducers in various transmembrane signaling systems. This Caenorhabditis briggsae protein is Guanine nucleotide-binding protein alpha-6 subunit (gpa-6).